Reading from the N-terminus, the 475-residue chain is Cytosolic enolase 3 (475 aa).

Ser2 carries the N-acetylserine modification. Residues His200 and Glu209 each contribute to the substrate site. Asp252 functions as the Proton donor in the catalytic mechanism. Mg(2+) contacts are provided by Asp287, Glu336, and Asp361. Glu336 and Asp361 together coordinate substrate. Catalysis depends on Lys386, which acts as the Proton acceptor. Residues 413–416 (SHRC) and Lys437 each bind substrate.

The protein belongs to the enolase family. In terms of assembly, homodimer. Requires Mg(2+) as cofactor.

The protein resides in the cytoplasm. Its subcellular location is the nucleus. It catalyses the reaction (2R)-2-phosphoglycerate = phosphoenolpyruvate + H2O. It functions in the pathway carbohydrate degradation; glycolysis; pyruvate from D-glyceraldehyde 3-phosphate: step 4/5. The sequence is that of Cytosolic enolase 3 (ENO3) from Arabidopsis thaliana (Mouse-ear cress).